The following is a 693-amino-acid chain: DNA ligase (693 aa).

Residues 43 to 47 (DEEYD), 92 to 93 (SL), and Glu123 contribute to the NAD(+) site. The N6-AMP-lysine intermediate role is filled by Lys125. The NAD(+) site is built by Arg146, Glu180, Lys296, and Lys320. Cys414, Cys417, Cys433, and Cys438 together coordinate Zn(2+). One can recognise a BRCT domain in the interval 595–684 (VKYDVLKGLT…AKLKGYNFDE (90 aa)).

Belongs to the NAD-dependent DNA ligase family. LigA subfamily. It depends on Mg(2+) as a cofactor. Mn(2+) is required as a cofactor.

The enzyme catalyses NAD(+) + (deoxyribonucleotide)n-3'-hydroxyl + 5'-phospho-(deoxyribonucleotide)m = (deoxyribonucleotide)n+m + AMP + beta-nicotinamide D-nucleotide.. Functionally, DNA ligase that catalyzes the formation of phosphodiester linkages between 5'-phosphoryl and 3'-hydroxyl groups in double-stranded DNA using NAD as a coenzyme and as the energy source for the reaction. It is essential for DNA replication and repair of damaged DNA. The polypeptide is DNA ligase (Thermotoga neapolitana (strain ATCC 49049 / DSM 4359 / NBRC 107923 / NS-E)).